Consider the following 288-residue polypeptide: Allergen Asp f 7 homolog (288 aa).

Residues Met-1–Ala-20 form the signal peptide. Low complexity-rich tracts occupy residues Thr-48–Val-107 and Thr-117–Thr-129. Residues Thr-48–Gly-161 are disordered. Residues Thr-130–Lys-151 are compositionally biased toward pro residues. Asn-268 carries N-linked (GlcNAc...) asparagine glycosylation.

The protein localises to the secreted. This Arthroderma benhamiae (strain ATCC MYA-4681 / CBS 112371) (Trichophyton mentagrophytes) protein is Allergen Asp f 7 homolog.